The sequence spans 635 residues: Threonine--tRNA ligase (635 aa).

Residues 1–61 enclose the TGS domain; the sequence is MIQITLPDAS…EKDSALSIIT (61 aa). A catalytic region spans residues 242 to 533; it reads DHRKLGKELD…LIEEHAGALP (292 aa). The Zn(2+) site is built by cysteine 333, histidine 384, and histidine 510.

The protein belongs to the class-II aminoacyl-tRNA synthetase family. Homodimer. Requires Zn(2+) as cofactor.

It is found in the cytoplasm. The enzyme catalyses tRNA(Thr) + L-threonine + ATP = L-threonyl-tRNA(Thr) + AMP + diphosphate + H(+). Its function is as follows. Catalyzes the attachment of threonine to tRNA(Thr) in a two-step reaction: L-threonine is first activated by ATP to form Thr-AMP and then transferred to the acceptor end of tRNA(Thr). Also edits incorrectly charged L-seryl-tRNA(Thr). This Polaromonas sp. (strain JS666 / ATCC BAA-500) protein is Threonine--tRNA ligase.